We begin with the raw amino-acid sequence, 430 residues long: Sphingosine-1-phosphate phosphatase 1 (430 aa).

Residues 34–100 (GSPKAGEDAE…PRRAGSLRRN (67 aa)) are disordered. Serine 101 is modified (phosphoserine). Residue threonine 103 is modified to Phosphothreonine. Transmembrane regions (helical) follow at residues 121 to 141 (FCFG…PFWI), 152 to 172 (LVII…IIRW), 193 to 213 (MPST…LLTY), and 216 to 236 (WQYP…LVCL). Residues 167–175 (KDIIRWPRP) form a phosphatase sequence motif I region. The phosphatase sequence motif II stretch occupies residues 194-197 (PSTH). Histidine 197 serves as the catalytic Proton donor. A phosphatase sequence motif III region spans residues 237-248 (SRIYMGMHSILD). Histidine 244 serves as the catalytic Nucleophile. The next 5 membrane-spanning stretches (helical) occupy residues 246-266 (ILDV…FYPL), 279-299 (YAPL…FTLD), 311-331 (ILGS…LGIS), 348-368 (VTLF…VLFV), and 409-429 (YGTV…FIGI).

This sequence belongs to the type 2 lipid phosphate phosphatase family.

It localises to the endoplasmic reticulum membrane. Its subcellular location is the cell membrane. The catalysed reaction is sphinganine 1-phosphate + H2O = sphinganine + phosphate. The enzyme catalyses sphing-4-enine 1-phosphate + H2O = sphing-4-enine + phosphate. In terms of biological role, specifically dephosphorylates sphingosine 1-phosphate (S1P), dihydro-S1P, and phyto-S1P. Does not act on ceramide 1-phosphate, lysophosphatidic acid or phosphatidic acid. Sphingosine-1-phosphate phosphatase activity is needed for efficient recycling of sphingosine into the sphingolipid synthesis pathway. Regulates the intracellular levels of the bioactive sphingolipid metabolite S1P that regulates diverse biological processes acting both as an extracellular receptor ligand or as an intracellular second messenger. Involved in efficient ceramide synthesis from exogenous sphingoid bases. Converts S1P to sphingosine, which is readily metabolized to ceramide via ceramide synthase. In concert with sphingosine kinase 2 (SphK2), recycles sphingosine into ceramide through a phosphorylation/dephosphorylation cycle. Regulates endoplasmic-to-Golgi trafficking of ceramides, resulting in the regulation of ceramide levels in the endoplasmic reticulum, preferentially long-chain ceramide species, and influences the anterograde membrane transport of both ceramide and proteins from the endoplasmic reticulum to the Golgi apparatus. The modulation of intracellular ceramide levels in turn regulates apoptosis. Via S1P levels, modulates resting tone, intracellular Ca(2+) and myogenic vasoconstriction in resistance arteries. Also involved in unfolded protein response (UPR) and ER stress-induced autophagy via regulation of intracellular S1P levels. Involved in the regulation of epidermal homeostasis and keratinocyte differentiation. The protein is Sphingosine-1-phosphate phosphatase 1 of Rattus norvegicus (Rat).